Reading from the N-terminus, the 563-residue chain is Urocanate hydratase (563 aa).

NAD(+) is bound by residues glycine 53–glycine 54, glutamine 131, glycine 177–glycine 179, glutamate 197, arginine 202, asparagine 243–alanine 244, glutamine 264–histidine 268, tyrosine 274–leucine 275, and tyrosine 323. Residue cysteine 411 is part of the active site. Position 493 (glycine 493) interacts with NAD(+).

This sequence belongs to the urocanase family. It depends on NAD(+) as a cofactor.

It is found in the cytoplasm. The enzyme catalyses 4-imidazolone-5-propanoate = trans-urocanate + H2O. It functions in the pathway amino-acid degradation; L-histidine degradation into L-glutamate; N-formimidoyl-L-glutamate from L-histidine: step 2/3. In terms of biological role, catalyzes the conversion of urocanate to 4-imidazolone-5-propionate. The sequence is that of Urocanate hydratase from Yersinia enterocolitica serotype O:8 / biotype 1B (strain NCTC 13174 / 8081).